A 953-amino-acid chain; its full sequence is Glutamate receptor 3.5 (953 aa).

The first 29 residues, Met-1–Gly-29, serve as a signal peptide directing secretion. Residues Ala-30–Thr-606 lie on the Extracellular side of the membrane. Asn-38, Asn-95, Asn-223, Asn-371, Asn-397, Asn-436, Asn-454, and Asn-569 each carry an N-linked (GlcNAc...) asparagine glycan. Residues Ile-607–Leu-627 traverse the membrane as a helical segment. Residues Glu-628 to Arg-636 lie on the Cytoplasmic side of the membrane. Residues Gly-637–Ser-657 traverse the membrane as a helical segment. The Cytoplasmic segment spans residues His-658–Arg-668. A helical transmembrane segment spans residues Phe-669–Leu-689. The Extracellular portion of the chain corresponds to Thr-690 to Ser-850. The chain crosses the membrane as a helical span at residues Phe-851–Trp-871. At Lys-872–Gln-953 the chain is on the cytoplasmic side. The disordered stretch occupies residues Glu-928–Gln-953.

Belongs to the glutamate-gated ion channel (TC 1.A.10.1) family. In terms of assembly, may form heteromers. Expressed predominantly in roots. Also detected in shoots.

It is found in the membrane. Glutamate-gated receptor that probably acts as a non-selective cation channel. May be involved in light-signal transduction and calcium homeostasis via the regulation of calcium influx into cells. The protein is Glutamate receptor 3.5 (GLR3.5) of Arabidopsis thaliana (Mouse-ear cress).